The following is a 151-amino-acid chain: UPF0208 membrane protein YfbV (151 aa).

The next 2 membrane-spanning stretches (helical) occupy residues 46–65 (YAIR…QIAL) and 69–91 (LGPA…WWLG).

Belongs to the UPF0208 family.

It is found in the cell inner membrane. This Shigella flexneri serotype 5b (strain 8401) protein is UPF0208 membrane protein YfbV.